Here is a 241-residue protein sequence, read N- to C-terminus: Ribulose-phosphate 3-epimerase 1 (241 aa).

Substrate is bound at residue Ser-21. His-46, Asp-48, and His-79 together coordinate a divalent metal cation. The active-site Proton acceptor is the Asp-48. Substrate-binding positions include His-79, 155 to 158 (GFGG), 192 to 194 (DGG), and 214 to 215 (GS). Asp-192 provides a ligand contact to a divalent metal cation. Catalysis depends on Asp-192, which acts as the Proton donor.

It belongs to the ribulose-phosphate 3-epimerase family. The cofactor is a divalent metal cation.

The enzyme catalyses D-ribulose 5-phosphate = D-xylulose 5-phosphate. It functions in the pathway carbohydrate degradation. Functionally, catalyzes the reversible epimerization of D-ribulose 5-phosphate to D-xylulose 5-phosphate. The chain is Ribulose-phosphate 3-epimerase 1 from Cupriavidus necator (strain ATCC 17699 / DSM 428 / KCTC 22496 / NCIMB 10442 / H16 / Stanier 337) (Ralstonia eutropha).